The primary structure comprises 165 residues: Large ribosomal subunit protein uL11 (165 aa).

Ser38 is modified (phosphoserine). Lys40 participates in a covalent cross-link: Glycyl lysine isopeptide (Lys-Gly) (interchain with G-Cter in SUMO2). A Glycyl lysine isopeptide (Lys-Gly) (interchain with G-Cter in ubiquitin) cross-link involves residue Lys48. Lys54 is subject to N6-acetyllysine. Lys83 participates in a covalent cross-link: Glycyl lysine isopeptide (Lys-Gly) (interchain with G-Cter in ubiquitin). Ser165 carries the post-translational modification Phosphoserine.

The protein belongs to the universal ribosomal protein uL11 family. As to quaternary structure, component of the large ribosomal subunit. Mature ribosomes consist of a small (40S) and a large (60S) subunit. The 40S subunit contains about 33 different proteins and 1 molecule of RNA (18S). The 60S subunit contains about 49 different proteins and 3 molecules of RNA (28S, 5.8S and 5S). Post-translationally, ubiquitinated at Lys-48 and Lys-83 by RNF14 and RNF25 in response to ribosome collisions (ribosome stalling).

The protein resides in the cytoplasm. In terms of biological role, component of the large ribosomal subunit. The ribosome is a large ribonucleoprotein complex responsible for the synthesis of proteins in the cell. Binds directly to 26S ribosomal RNA. This is Large ribosomal subunit protein uL11 (Rpl12) from Mus musculus (Mouse).